A 342-amino-acid chain; its full sequence is MADSCCPENPTAVPTVPTISTCSNGGSIRNAIRLPSSCRCRTWQLVTHQENRQGPDSVPVSSEPVSCPSTCFPETPCVGFICQPIGSHMACCASDTGGSPHPAASCQPSCLESAGCHTMCYENSSCHQSSGQGSACTSGSCQTACGPSASCDDRSCQPSCSEATSYAETPCLPAGCEAGSCQPTSCQGGSHQPTRGEGQLCQSVYYQPICYVLKSCQSTPCMSVSCQPLTCMCFCSQTCCVPPTCQPLHCQTTPIISFICQPVAPCQSPCFLKSSSKSASCVMISGQQICGGPTPDQSGCQSPSCHPPCCVTGLGQPSSSGPGCCPPTSPDICQAGTYGPTS.

Tandem repeats lie at residues C5 to N9, C91 to D95, C239 to P243, C309 to G313, and C324 to T328. Residues C5 to T328 are 5 X 5 AA repeats of C-C-X(3).

This sequence belongs to the KRTAP type 10 family.

The sequence is that of Keratin-associated protein 29-1 (Krtap29-1) from Mus musculus (Mouse).